Consider the following 217-residue polypeptide: Adenylate kinase (217 aa).

Residue 10 to 15 participates in ATP binding; it reads GAGKGT. The NMP stretch occupies residues 30–59; that stretch reads STGDMLRAQVKAGTALGLEAKKHMDAGGLV. AMP-binding positions include Thr31, Arg36, 57-59, 85-88, and Gln92; these read GLV and GFPR. An LID region spans residues 122–159; it reads GRRAHLASGRTYHVKFNPPKVEGIDDVTGEPLVQRDDD. ATP is bound by residues Arg123 and 132-133; that span reads TY. AMP contacts are provided by Arg156 and Arg167. Position 203 (Gly203) interacts with ATP.

Belongs to the adenylate kinase family. Monomer.

The protein localises to the cytoplasm. The enzyme catalyses AMP + ATP = 2 ADP. Its pathway is purine metabolism; AMP biosynthesis via salvage pathway; AMP from ADP: step 1/1. In terms of biological role, catalyzes the reversible transfer of the terminal phosphate group between ATP and AMP. Plays an important role in cellular energy homeostasis and in adenine nucleotide metabolism. The chain is Adenylate kinase from Dechloromonas aromatica (strain RCB).